The primary structure comprises 300 residues: MRLFENSKDMENRKRLLRAKKAAGNNNCFECKSVNPQFVSCSFGIFICVNCANLLRGMGTNIFCVKSITMDNFEEKDVRRVEKSGNNRFGSFLSKNGILQNGIPLREKYDNLFAKSYKRRLANEVRSNDINRNMYLGFNNFQQYTNGATSQIRDRTLREISNNSNASEGAEFVLPEKVLGSDNFQDCERFPACLSSERNLDENNVTSATSTLTIEKFQNDPIGTISRSWQLLSDALYKSYEDFKGSVVQPTIENIQQRNLPNDIKRSFVHFNEKLHETPHLPSPVFSCFTGGDILPPEFN.

Positions 11–130 (ENRKRLLRAK…LANEVRSNDI (120 aa)) constitute an Arf-GAP domain. A C4-type zinc finger spans residues 28-51 (CFECKSVNPQFVSCSFGIFICVNC).

This Saccharomyces cerevisiae (strain ATCC 204508 / S288c) (Baker's yeast) protein is Sporulation protein SPS18 (SPS18).